Reading from the N-terminus, the 265-residue chain is Type 1 encapsulin shell protein (265 aa).

It belongs to the encapsulin family. Family 1 subfamily. Multimeric. The encapsulin nanocompartment is formed by 60 subunits. Monomers form pentamers which assemble to form shells. There are 12 pores where the pentamers meet as well as 3-fold axis channels and dimer channels; none are larger than 3-4 Angstroms in diameter. The N-terminus of the protein is inside the shell, the C-terminus is outside. The initiator methionine is partially removed. When isolated from culture filtrate isoelectric focusing gives 3 bands, none of which are glycosylated.

It localises to the encapsulin nanocompartment. It is found in the secreted. Its subcellular location is the cell membrane. Shell component of a type 1 encapsulin nanocompartment in situ; its cargo protects against oxidative stress at low pH. In situ and in E.coli assembles into proteinaceous shells about 22 nm in diameter with 2.5 nm thick walls. Cargo proteins are targeted to the interior via their C-terminal extensions; empty intact shells can be isolated in E.coli in the absence of cargo protein. There are at least 4 possible cargo proteins, DyP (encoded in the same locus), FolB, BfrB and Rv1762c; DyP and Rv1762c have been identified in vivo. Probably involved in protection against oxidative damage from the host immune response. A T-cell antigen found in bacterial culture cell filtrates, stimulates mouse immune response. Does not have detectable bacteriocin activity. The protein is Type 1 encapsulin shell protein of Mycobacterium tuberculosis (strain ATCC 25618 / H37Rv).